We begin with the raw amino-acid sequence, 309 residues long: ADP,ATP carrier protein 1 (309 aa).

Solcar repeat units lie at residues 11–104, 116–208, and 216–302; these read SHFG…IKSL, KWFA…FKPV, and GSFV…LQLI. 5 consecutive transmembrane segments (helical) span residues 13–40, 81–105, 114–134, 184–205, and 219–239; these read FGVD…VKLL, TANV…KSLL, YAKW…LSLL, FVPS…YDSF, and VASF…SYPL. ADP-binding residues include R86 and K98. R243 is a binding site for ADP. The tract at residues 243–248 is important for transport activity; that stretch reads RRRMMM. The Nucleotide carrier signature motif signature appears at 243–248; sequence RRRMMM. Residues 279 to 299 form a helical membrane-spanning segment; sequence CGANIFRGVAAAGVISLYDQL.

This sequence belongs to the mitochondrial carrier (TC 2.A.29) family. Monomer.

The protein localises to the mitochondrion inner membrane. The enzyme catalyses ADP(in) + ATP(out) = ADP(out) + ATP(in). The matrix-open state (m-state) is inhibited by the membrane-permeable bongkrekic acid (BKA). The cytoplasmic-open state (c-state) is inhibited by the membrane-impermeable toxic inhibitor carboxyatractyloside (CATR). In terms of biological role, ADP:ATP antiporter that mediates import of ADP into the mitochondrial matrix for ATP synthesis, and export of ATP out to fuel the cell. Cycles between the cytoplasmic-open state (c-state) and the matrix-open state (m-state): operates by the alternating access mechanism with a single substrate-binding site intermittently exposed to either the cytosolic (c-state) or matrix (m-state) side of the inner mitochondrial membrane. The protein is ADP,ATP carrier protein 1 (AAC1) of Saccharomyces cerevisiae (strain ATCC 204508 / S288c) (Baker's yeast).